Here is a 159-residue protein sequence, read N- to C-terminus: Ribosomal RNA large subunit methyltransferase H (159 aa).

S-adenosyl-L-methionine-binding positions include Leu-76, Gly-108, and 127–132 (FGLLTL).

The protein belongs to the RNA methyltransferase RlmH family. In terms of assembly, homodimer.

The protein resides in the cytoplasm. The enzyme catalyses pseudouridine(1915) in 23S rRNA + S-adenosyl-L-methionine = N(3)-methylpseudouridine(1915) in 23S rRNA + S-adenosyl-L-homocysteine + H(+). Specifically methylates the pseudouridine at position 1915 (m3Psi1915) in 23S rRNA. This chain is Ribosomal RNA large subunit methyltransferase H, found in Streptococcus pyogenes serotype M3 (strain SSI-1).